The primary structure comprises 89 residues: Translation initiation factor IF-1, chloroplastic (89 aa).

Residues 1 to 73 enclose the S1-like domain; that stretch reads MKEKEAKWVV…TKGRIIYRLP (73 aa).

Belongs to the IF-1 family. Component of the 30S ribosomal translation pre-initiation complex which assembles on the 30S ribosome in the order IF-2 and IF-3, IF-1 and N-formylmethionyl-tRNA(fMet); mRNA recruitment can occur at any time during PIC assembly.

The protein resides in the plastid. It localises to the chloroplast. One of the essential components for the initiation of protein synthesis. Stabilizes the binding of IF-2 and IF-3 on the 30S subunit to which N-formylmethionyl-tRNA(fMet) subsequently binds. Helps modulate mRNA selection, yielding the 30S pre-initiation complex (PIC). Upon addition of the 50S ribosomal subunit IF-1, IF-2 and IF-3 are released leaving the mature 70S translation initiation complex. The chain is Translation initiation factor IF-1, chloroplastic from Jasminum nudiflorum (Winter jasmine).